Consider the following 314-residue polypeptide: Altered inheritance of mitochondria protein 6 homolog ARB_06966 (314 aa).

A signal peptide spans 1-21; the sequence is MKSSILASAAILAASLEPVAA. Asparagine 91 and asparagine 184 each carry an N-linked (GlcNAc...) asparagine glycan.

The protein belongs to the AIM6 family.

Its subcellular location is the secreted. This chain is Altered inheritance of mitochondria protein 6 homolog ARB_06966, found in Arthroderma benhamiae (strain ATCC MYA-4681 / CBS 112371) (Trichophyton mentagrophytes).